Here is a 365-residue protein sequence, read N- to C-terminus: N5-carboxyaminoimidazole ribonucleotide synthase (365 aa).

ATP-binding positions include R102, K143, 148–154 (GYDGKGQ), 177–180 (EEYV), E185, and 256–257 (NE). An ATP-grasp domain is found at 106–286 (KLFYRQHNLP…QFEQHLRAII (181 aa)).

It belongs to the PurK/PurT family. In terms of assembly, homodimer.

The catalysed reaction is 5-amino-1-(5-phospho-beta-D-ribosyl)imidazole + hydrogencarbonate + ATP = 5-carboxyamino-1-(5-phospho-D-ribosyl)imidazole + ADP + phosphate + 2 H(+). It participates in purine metabolism; IMP biosynthesis via de novo pathway; 5-amino-1-(5-phospho-D-ribosyl)imidazole-4-carboxylate from 5-amino-1-(5-phospho-D-ribosyl)imidazole (N5-CAIR route): step 1/2. Functionally, catalyzes the ATP-dependent conversion of 5-aminoimidazole ribonucleotide (AIR) and HCO(3)(-) to N5-carboxyaminoimidazole ribonucleotide (N5-CAIR). This is N5-carboxyaminoimidazole ribonucleotide synthase from Saccharolobus solfataricus (strain ATCC 35092 / DSM 1617 / JCM 11322 / P2) (Sulfolobus solfataricus).